Consider the following 369-residue polypeptide: 3-dehydroquinate synthase (369 aa).

NAD(+)-binding positions include 71 to 76, 105 to 109, 129 to 130, Lys142, Lys151, and 169 to 172; these read DGECHK, GVIND, TT, and TLST. Glu184, His247, and His264 together coordinate Zn(2+).

Belongs to the sugar phosphate cyclases superfamily. Dehydroquinate synthase family. Co(2+) serves as cofactor. It depends on Zn(2+) as a cofactor. The cofactor is NAD(+).

The protein resides in the cytoplasm. It carries out the reaction 7-phospho-2-dehydro-3-deoxy-D-arabino-heptonate = 3-dehydroquinate + phosphate. Its pathway is metabolic intermediate biosynthesis; chorismate biosynthesis; chorismate from D-erythrose 4-phosphate and phosphoenolpyruvate: step 2/7. Catalyzes the conversion of 3-deoxy-D-arabino-heptulosonate 7-phosphate (DAHP) to dehydroquinate (DHQ). The polypeptide is 3-dehydroquinate synthase (Dichelobacter nodosus (strain VCS1703A)).